The primary structure comprises 256 residues: Triosephosphate isomerase (256 aa).

Residue 9–11 (NWK) coordinates substrate. His95 (electrophile) is an active-site residue. The active-site Proton acceptor is Glu167. Residues Gly173, Ser212, and 233 to 234 (GG) each bind substrate.

Belongs to the triosephosphate isomerase family. Homodimer.

It is found in the cytoplasm. The enzyme catalyses D-glyceraldehyde 3-phosphate = dihydroxyacetone phosphate. It functions in the pathway carbohydrate biosynthesis; gluconeogenesis. It participates in carbohydrate degradation; glycolysis; D-glyceraldehyde 3-phosphate from glycerone phosphate: step 1/1. Functionally, involved in the gluconeogenesis. Catalyzes stereospecifically the conversion of dihydroxyacetone phosphate (DHAP) to D-glyceraldehyde-3-phosphate (G3P). This Proteus mirabilis (strain HI4320) protein is Triosephosphate isomerase.